Reading from the N-terminus, the 642-residue chain is 2-oxoacid:ferredoxin oxidoreductase 2, subunit alpha (642 aa).

Positions 263–267 match the YPITP motif motif; it reads YPITP. 2 residues coordinate substrate: threonine 266 and arginine 356.

In terms of assembly, heterodimer composed of an alpha and a beta subunit.

The catalysed reaction is a 2-oxocarboxylate + 2 oxidized [2Fe-2S]-[ferredoxin] + CoA = an acyl-CoA + 2 reduced [2Fe-2S]-[ferredoxin] + CO2 + H(+). Its function is as follows. Catalyzes the coenzyme A-dependent oxidative decarboxylation of different 2-oxoacids such as pyruvate, 2-oxobutyrate, glyoxylate and 2-oxoglutarate to form their CoA derivatives. The polypeptide is 2-oxoacid:ferredoxin oxidoreductase 2, subunit alpha (Aeropyrum pernix (strain ATCC 700893 / DSM 11879 / JCM 9820 / NBRC 100138 / K1)).